The sequence spans 181 residues: Cyclic AMP-dependent transcription factor ATF-3 (181 aa).

A disordered region spans residues 73–97 (EMSVTKSEAAPEEDERKRRRRERNK). Residue K78 forms a Glycyl lysine isopeptide (Lys-Gly) (interchain with G-Cter in SUMO2) linkage. A bZIP domain is found at 86 to 149 (DERKRRRRER…QHLIYMLNLH (64 aa)). The interval 88–110 (RKRRRRERNKIAAAKCRNKKKEK) is basic motif. The leucine-zipper stretch occupies residues 114-142 (LQKESEKLESVNAELKAQIEELKNEKQHL). Residue T162 is modified to Phosphothreonine. K175 is covalently cross-linked (Glycyl lysine isopeptide (Lys-Gly) (interchain with G-Cter in SUMO2)).

The protein belongs to the bZIP family. ATF subfamily. As to quaternary structure, binds DNA as a homodimer or a heterodimer. Interacts with KAT5; promoting KAT5 autoacetylation and KAT5 deubiquitination by USP7.

Its subcellular location is the nucleus. Its function is as follows. This protein binds the cAMP response element (CRE) (consensus: 5'-GTGACGT[AC][AG]-3'), a sequence present in many viral and cellular promoters. Represses transcription from promoters with ATF sites. It may repress transcription by stabilizing the binding of inhibitory cofactors at the promoter. This is Cyclic AMP-dependent transcription factor ATF-3 from Mus musculus (Mouse).